The sequence spans 883 residues: Leucine--tRNA ligase (883 aa).

A 'HIGH' region motif is present at residues 43–53; sequence PYPSGRIHIGH. The short motif at 630 to 634 is the 'KMSKS' region element; it reads KMSKS. Residue Lys-633 participates in ATP binding.

Belongs to the class-I aminoacyl-tRNA synthetase family.

The protein localises to the cytoplasm. The catalysed reaction is tRNA(Leu) + L-leucine + ATP = L-leucyl-tRNA(Leu) + AMP + diphosphate. The protein is Leucine--tRNA ligase of Nitrobacter winogradskyi (strain ATCC 25391 / DSM 10237 / CIP 104748 / NCIMB 11846 / Nb-255).